The sequence spans 139 residues: Angiogenin (139 aa).

The N-terminal stretch at 1 to 21 (MAMSSLWWTAILLLALTVSMC) is a signal peptide. Histidine 34 serves as the catalytic Proton acceptor. Cystine bridges form between cysteine 49-cysteine 102, cysteine 64-cysteine 111, and cysteine 82-cysteine 126. TRNA contacts are provided by cysteine 102 and valine 122. Histidine 133 (proton donor) is an active-site residue.

The protein belongs to the pancreatic ribonuclease family. In terms of assembly, homodimer. Interacts with RNH1; inhibiting ANG ribonuclease activity.

The protein resides in the secreted. Its subcellular location is the nucleus. The protein localises to the nucleolus. It is found in the cytoplasm. It localises to the stress granule. In terms of biological role, secreted ribonuclease that can either promote or restrict cell proliferation of target cells, depending on the context. Endocytosed in target cells via its receptor PLXNB2 and translocates to the cytoplasm or nucleus. Under stress conditions, localizes to the cytoplasm and promotes the assembly of stress granules (SGs): specifically cleaves a subset of tRNAs within anticodon loops to produce tRNA-derived stress-induced fragments (tiRNAs), resulting in translation repression and inhibition of cell proliferation. tiRNas also prevent formation of apoptosome, thereby promoting cell survival. Preferentially cleaves RNAs between a pyrimidine and an adenosine residue, suggesting that it cleaves the anticodon loop of tRNA(Ala) (32-UUAGCAU-38) after positions 33 and 36. Cleaves a subset of tRNAs, including tRNA(Ala), tRNA(Glu), tRNA(Gly), tRNA(Lys), tRNA(Val), tRNA(His), tRNA(Asp) and tRNA(Sec). Under growth conditions and in differentiated cells, translocates to the nucleus and stimulates ribosomal RNA (rRNA) transcription, including that containing the initiation site sequences of 45S rRNA, thereby promoting cell growth and proliferation. Angiogenin induces vascularization of normal and malignant tissues via its ability to promote rRNA transcription. In Gallus gallus (Chicken), this protein is Angiogenin (ANG).